Consider the following 274-residue polypeptide: Glutamate--cysteine ligase regulatory subunit (274 aa).

S59 is subject to Phosphoserine. An N6-acetyllysine modification is found at K263.

The protein belongs to the aldo/keto reductase family. Glutamate--cysteine ligase light chain subfamily. As to quaternary structure, heterodimer of a catalytic heavy chain and a regulatory light chain. Most abundant in kidney. Also found in liver and testis.

Its pathway is sulfur metabolism; glutathione biosynthesis; glutathione from L-cysteine and L-glutamate: step 1/2. The protein is Glutamate--cysteine ligase regulatory subunit (Gclm) of Rattus norvegicus (Rat).